The primary structure comprises 466 residues: 3-isopropylmalate dehydratase large subunit (466 aa).

Residues Cys347, Cys407, and Cys410 each contribute to the [4Fe-4S] cluster site.

Belongs to the aconitase/IPM isomerase family. LeuC type 1 subfamily. In terms of assembly, heterodimer of LeuC and LeuD. [4Fe-4S] cluster serves as cofactor.

The enzyme catalyses (2R,3S)-3-isopropylmalate = (2S)-2-isopropylmalate. It functions in the pathway amino-acid biosynthesis; L-leucine biosynthesis; L-leucine from 3-methyl-2-oxobutanoate: step 2/4. Its function is as follows. Catalyzes the isomerization between 2-isopropylmalate and 3-isopropylmalate, via the formation of 2-isopropylmaleate. The polypeptide is 3-isopropylmalate dehydratase large subunit (Blochmanniella pennsylvanica (strain BPEN)).